A 380-amino-acid chain; its full sequence is O-phospho-L-seryl-tRNA:Cys-tRNA synthase (380 aa).

Residues 86–87 (AR), asparagine 192, and 215–217 (SGH) each bind pyridoxal 5'-phosphate. Residue lysine 218 is modified to N6-(pyridoxal phosphate)lysine.

The protein belongs to the SepCysS family. In terms of assembly, homodimer. Interacts with SepRS. Pyridoxal 5'-phosphate is required as a cofactor.

The enzyme catalyses O-phospho-L-seryl-tRNA(Cys) + hydrogen sulfide + H(+) = L-cysteinyl-tRNA(Cys) + phosphate. In terms of biological role, converts O-phospho-L-seryl-tRNA(Cys) (Sep-tRNA(Cys)) to L-cysteinyl-tRNA(Cys) (Cys-tRNA(Cys)). In Methanococcus maripaludis (strain C5 / ATCC BAA-1333), this protein is O-phospho-L-seryl-tRNA:Cys-tRNA synthase.